Consider the following 273-residue polypeptide: Formamidopyrimidine-DNA glycosylase (273 aa).

The active-site Schiff-base intermediate with DNA is P2. The active-site Proton donor is the E3. K57 acts as the Proton donor; for beta-elimination activity in catalysis. Positions 91, 110, and 151 each coordinate DNA. Residues 236 to 270 (QVYGRKDEACNDCGTIIEAKVIGQRNSYFCPHCQM) form an FPG-type zinc finger. Residue R260 is the Proton donor; for delta-elimination activity of the active site.

It belongs to the FPG family. In terms of assembly, monomer. Zn(2+) is required as a cofactor.

The catalysed reaction is Hydrolysis of DNA containing ring-opened 7-methylguanine residues, releasing 2,6-diamino-4-hydroxy-5-(N-methyl)formamidopyrimidine.. The enzyme catalyses 2'-deoxyribonucleotide-(2'-deoxyribose 5'-phosphate)-2'-deoxyribonucleotide-DNA = a 3'-end 2'-deoxyribonucleotide-(2,3-dehydro-2,3-deoxyribose 5'-phosphate)-DNA + a 5'-end 5'-phospho-2'-deoxyribonucleoside-DNA + H(+). Functionally, involved in base excision repair of DNA damaged by oxidation or by mutagenic agents. Acts as a DNA glycosylase that recognizes and removes damaged bases. Has a preference for oxidized purines, such as 7,8-dihydro-8-oxoguanine (8-oxoG). Has AP (apurinic/apyrimidinic) lyase activity and introduces nicks in the DNA strand. Cleaves the DNA backbone by beta-delta elimination to generate a single-strand break at the site of the removed base with both 3'- and 5'-phosphates. This chain is Formamidopyrimidine-DNA glycosylase, found in Actinobacillus pleuropneumoniae serotype 3 (strain JL03).